Consider the following 206-residue polypeptide: Large ribosomal subunit protein uL4 (206 aa).

Belongs to the universal ribosomal protein uL4 family. Part of the 50S ribosomal subunit.

Functionally, one of the primary rRNA binding proteins, this protein initially binds near the 5'-end of the 23S rRNA. It is important during the early stages of 50S assembly. It makes multiple contacts with different domains of the 23S rRNA in the assembled 50S subunit and ribosome. In terms of biological role, forms part of the polypeptide exit tunnel. The protein is Large ribosomal subunit protein uL4 of Rhodopseudomonas palustris (strain BisB5).